We begin with the raw amino-acid sequence, 982 residues long: E3 ubiquitin-protein ligase CBL-B (982 aa).

A 4H region spans residues 35 to 167 (PPKQAAADRR…KAIFPNGQFQ (133 aa)). Residues 35-343 (PPKQAAADRR…GRSYNPDLTG (309 aa)) enclose the Cbl-PTB domain. The interval 168 to 240 (GDNFRITKAD…FEFDIFTRLF (73 aa)) is EF-hand-like. Residues Asp221, Thr223, Asn225, Tyr227, and Glu232 each coordinate Ca(2+). Residues 241 to 343 (QPWGSILRNW…GRSYNPDLTG (103 aa)) form an SH2-like region. Residue Ser282 is modified to Phosphoserine; by PKC/PRKCQ. Arg286 lines the 4-O-phospho-L-tyrosine pocket. The tract at residues 344–372 (LCEPTPHDHIKVTQEQYELYCEMGSTFQL) is linker. Tyr363 bears the Phosphotyrosine mark. The RING-type zinc finger occupies 373 to 412 (CKICAENDKDVKIEPCGHLMCTSCLTAWQESDGQGCPFCR). Positions 466–571 (NVRKCTDRQN…PPPIPPDNRL (106 aa)) are disordered. The segment covering 473–486 (RQNSPVTSPGSSPL) has biased composition (polar residues). Phosphoserine occurs at positions 476, 480, 484, 521, 525, and 529. The interval 543–568 (PLPAPPPPLRDPPPPPPERPPPIPPD) is interaction with VAV1. Positions 544 to 567 (LPAPPPPLRDPPPPPPERPPPIPP) are enriched in pro residues. Phosphoserine is present on Ser634. A phosphotyrosine mark is found at Tyr665 and Tyr709. Disordered stretches follow at residues 688-731 (GPLA…NVKP) and 769-929 (FDSA…EAAL). The segment covering 715–725 (HPVSLNSQPSH) has biased composition (polar residues). A compositionally biased stretch (pro residues) spans 819–828 (PSLPPPPPPA). Low complexity predominate over residues 838 to 848 (PPGSSSRPSSG). Residues 880–899 (VKTNRTSQDYDQLPSCSDGS) show a composition bias toward polar residues. Phosphotyrosine is present on Tyr889. The interaction with SH3KBP1 stretch occupies residues 891 to 927 (QLPSCSDGSQAPARPPKPRPRRTAPEIHHRKPHGPEA). The span at 906–922 (PKPRPRRTAPEIHHRKP) shows a compositional bias: basic residues. Positions 931 to 970 (NVDAKIAKLMGEGYAFEEVKRALEIAQNNVEVARSILREF) constitute a UBA domain.

Interacts with SH3 domain-containing proteins LCK, CRK and SORBS1. Interacts with LCP2 and ZAP70. Interacts with CBL. Interacts with SH3 domain-containing proteins VAV1, FYN, FGR, PLCG1, GRB2, CRKL, PIK3R1 and SH3KBP1/CIN85. Identified in heterotrimeric complexes with SH3KBP1/CIN85, CD2AP and ARHGEF7, where one CBLB peptide binds two copies of the other protein. Interacts with poly-ubiquitinated proteins. Dimerization is required for the binding of poly-ubiquitin, but not for the binding of mono-ubiquitin. Interacts with EGFR (phosphorylated). Interacts with IFT20. Post-translationally, phosphorylated on tyrosine and serine residues upon TCR or BCR activation, and upon various types of cell stimulation. Auto-ubiquitinated upon EGF-mediated cell activation or upon T-cell costimulation by CD28; which promotes proteasomal degradation. In terms of tissue distribution, expressed in placenta, heart, lung, kidney, spleen, ovary and testis, as well as fetal brain and liver and hematopoietic cell lines, but not in adult brain, liver, pancreas, salivary gland, or skeletal muscle. Present in lymphocytes (at protein level).

The protein resides in the cytoplasm. The enzyme catalyses S-ubiquitinyl-[E2 ubiquitin-conjugating enzyme]-L-cysteine + [acceptor protein]-L-lysine = [E2 ubiquitin-conjugating enzyme]-L-cysteine + N(6)-ubiquitinyl-[acceptor protein]-L-lysine.. It functions in the pathway protein modification; protein ubiquitination. Its function is as follows. E3 ubiquitin-protein ligase which accepts ubiquitin from specific E2 ubiquitin-conjugating enzymes, and transfers it to substrates, generally promoting their degradation by the proteasome. Negatively regulates TCR (T-cell receptor), BCR (B-cell receptor) and FCER1 (high affinity immunoglobulin epsilon receptor) signal transduction pathways. In naive T-cells, inhibits VAV1 activation upon TCR engagement and imposes a requirement for CD28 costimulation for proliferation and IL-2 production. Also acts by promoting PIK3R1/p85 ubiquitination, which impairs its recruitment to the TCR and subsequent activation. In activated T-cells, inhibits PLCG1 activation and calcium mobilization upon restimulation and promotes anergy. In B-cells, acts by ubiquitinating SYK and promoting its proteasomal degradation. Slightly promotes SRC ubiquitination. May be involved in EGFR ubiquitination and internalization. May be functionally coupled with the E2 ubiquitin-protein ligase UB2D3. In association with CBL, required for proper feedback inhibition of ciliary platelet-derived growth factor receptor-alpha (PDGFRA) signaling pathway via ubiquitination and internalization of PDGFRA. In Homo sapiens (Human), this protein is E3 ubiquitin-protein ligase CBL-B (CBLB).